The chain runs to 390 residues: GDSL esterase/lipase At1g28580 (390 aa).

The N-terminal stretch at Met1–Ser28 is a signal peptide. The active-site Nucleophile is Ser44. 2 N-linked (GlcNAc...) asparagine glycosylation sites follow: Asn140 and Asn322. Active-site residues include Asp347 and His350.

It belongs to the 'GDSL' lipolytic enzyme family.

It is found in the secreted. The polypeptide is GDSL esterase/lipase At1g28580 (Arabidopsis thaliana (Mouse-ear cress)).